A 283-amino-acid polypeptide reads, in one-letter code: ATP synthase gamma chain (283 aa).

This sequence belongs to the ATPase gamma chain family. As to quaternary structure, F-type ATPases have 2 components, CF(1) - the catalytic core - and CF(0) - the membrane proton channel. CF(1) has five subunits: alpha(3), beta(3), gamma(1), delta(1), epsilon(1). CF(0) has three main subunits: a, b and c.

The protein localises to the cell inner membrane. In terms of biological role, produces ATP from ADP in the presence of a proton gradient across the membrane. The gamma chain is believed to be important in regulating ATPase activity and the flow of protons through the CF(0) complex. This Ehrlichia ruminantium (strain Welgevonden) protein is ATP synthase gamma chain.